A 566-amino-acid chain; its full sequence is Cytochrome c oxidase subunit 1 (566 aa).

7 consecutive transmembrane segments (helical) span residues 29–49, 97–117, 141–161, 189–209, 227–247, 278–298, and 310–330; these read IGVLYLFTGGLVGLISVAFTV, VMITGHGILMMFFVVIPALFG, LSYWLYVAGTSLAVASLFAPG, LAIFAVHLSGASSILGAINMI, LFAWSIFVTAWLILLALPVLA, ILWFFGHPEVYIIVLPAFGIV, and IFGYLPMVYAMVAIGVLGFVV. His-102 is a Fe(II)-heme a binding site. Residues His-284 and Tyr-288 each contribute to the Cu cation site. A cross-link (1'-histidyl-3'-tyrosine (His-Tyr)) is located at residues 284 to 288; sequence HPEVY. The Cu cation site is built by His-333 and His-334. Transmembrane regions (helical) follow at residues 348–368 and 381–401; these read FMMATMVIAVPTGIKIFSWIA and MLWALGFLFLFTVGGVTGIVL. His-419 provides a ligand contact to heme a3. Transmembrane regions (helical) follow at residues 420–440, 455–475, and 499–519; these read FHYVMSLGAVFGIFAGIYFWI, LHFWMMFVGANLTFFPQHFLG, and LGAFLSFASFLFFLGVIFYTL. His-421 serves as a coordination point for Fe(II)-heme a. The segment at 543 to 566 is disordered; that stretch reads TSPPPEHTFEQLPKREDWERAPAH. Over residues 549–566 the composition is skewed to basic and acidic residues; it reads HTFEQLPKREDWERAPAH.

This sequence belongs to the heme-copper respiratory oxidase family. Cu(2+) is required as a cofactor. It depends on heme as a cofactor.

The protein resides in the cell membrane. The enzyme catalyses 4 Fe(II)-[cytochrome c] + O2 + 8 H(+)(in) = 4 Fe(III)-[cytochrome c] + 2 H2O + 4 H(+)(out). Its pathway is energy metabolism; oxidative phosphorylation. Cytochrome c oxidase is the component of the respiratory chain that catalyzes the reduction of oxygen to water. Subunits 1-3 form the functional core of the enzyme complex. Co I is the catalytic subunit of the enzyme. Electrons originating in cytochrome c are transferred via the copper A center of subunit 2 and heme a of subunit 1 to the bimetallic center formed by heme a3 and copper B. This cytochrome c oxidase shows proton pump activity across the membrane in addition to the electron transfer. This chain is Cytochrome c oxidase subunit 1 (ctaD), found in Cereibacter sphaeroides (Rhodobacter sphaeroides).